The following is a 146-amino-acid chain: VHWSAEEKQLITGLWGKVNVADCGAEALARLLIVYPWTQRFFASFGNLSSPTAINGNPMVRAHGKKVLTSFGEAVKNLDNIKNTFAQLSELHCDKLHVDPENFRLLGDILIIVLAAHFAKDFTPDSQAAWQKLVRVVAHALARKYH.

The region spanning 2–146 is the Globin domain; the sequence is HWSAEEKQLI…VAHALARKYH (145 aa). Heme b contacts are provided by His63 and His92.

The protein belongs to the globin family. In terms of assembly, heterotetramer of two alpha chains and two beta chains. Red blood cells.

Involved in oxygen transport from the lung to the various peripheral tissues. This Chroicocephalus ridibundus (Black-headed gull) protein is Hemoglobin subunit beta/beta' (HBB).